A 729-amino-acid polypeptide reads, in one-letter code: Rho GTPase-activating protein 28 (729 aa).

The interval 1-78 is disordered; it reads MEVEDSGGVV…ASVDSSASME (78 aa). A compositionally biased stretch (basic residues) spans 37-49; it reads LSRKSIPRCRRIN. Residues 63–76 are compositionally biased toward low complexity; that stretch reads SRSNSQASVDSSAS. Ser-70 is subject to Phosphoserine. Thr-164 carries the post-translational modification Phosphothreonine. The disordered stretch occupies residues 180 to 234; that stretch reads FGVSESPPSDSCEHATQLDGTKEEKDLPGVTKTSRPLPDDASLSSTTLSNGAQDE. The segment covering 221-231 has biased composition (polar residues); sequence SLSSTTLSNGA. The Rho-GAP domain occupies 384 to 581; that stretch reads VPLTVLLDND…LMLKYQKILW (198 aa).

Its function is as follows. GTPase activator for the Rho-type GTPases by converting them to an inactive GDP-bound state. The protein is Rho GTPase-activating protein 28 (Arhgap28) of Mus musculus (Mouse).